The primary structure comprises 312 residues: Porphobilinogen deaminase (312 aa).

C241 carries the S-(dipyrrolylmethanemethyl)cysteine modification.

Belongs to the HMBS family. In terms of assembly, monomer. Dipyrromethane is required as a cofactor.

The catalysed reaction is 4 porphobilinogen + H2O = hydroxymethylbilane + 4 NH4(+). The protein operates within porphyrin-containing compound metabolism; protoporphyrin-IX biosynthesis; coproporphyrinogen-III from 5-aminolevulinate: step 2/4. Functionally, tetrapolymerization of the monopyrrole PBG into the hydroxymethylbilane pre-uroporphyrinogen in several discrete steps. The sequence is that of Porphobilinogen deaminase from Trichlorobacter lovleyi (strain ATCC BAA-1151 / DSM 17278 / SZ) (Geobacter lovleyi).